Consider the following 147-residue polypeptide: MDLAPGRRARLLVALALVVLVALAARSGAEVITLTEETFSDKIKEKDTVWFVKFCVPWCKHCKNLGTLWEDLGKVMEGADEIEIGQVDCGVSKPVCSKVDIHSYPTFKVFYEGEEVAKYKGPRNVESLKNFVSDEAEKAGEAKLQDS.

The N-terminal stretch at 1-29 is a signal peptide; it reads MDLAPGRRARLLVALALVVLVALAARSGA. The region spanning 30 to 137 is the Thioredoxin domain; it reads EVITLTEETF…LKNFVSDEAE (108 aa). Catalysis depends on nucleophile residues C59 and C62. Cysteines 59 and 62 form a disulfide.

This sequence belongs to the protein disulfide isomerase family.

Functionally, acts as a protein-folding catalyst that interacts with nascent polypeptides to catalyze the formation, isomerization, and reduction or oxidation of disulfide bonds. May play a role in storage protein biogenesis. In Oryza sativa subsp. japonica (Rice), this protein is Protein disulfide isomerase-like 5-1 (PDIL5-1).